We begin with the raw amino-acid sequence, 2635 residues long: Protein unc-79 homolog (2635 aa).

Phosphoserine occurs at positions 754 and 758. Disordered stretches follow at residues 907-929, 1538-1575, 1607-1678, 1693-1832, 1863-1909, and 1929-1950; these read GPEG…NCTE, IAQR…DARR, LIDL…SVLS, SKDF…FKIQ, LGEQ…TQYR, and LEHQ…IQPG. Positions 1666–1678 are enriched in low complexity; sequence SSPSVPSHPSVLS. Over residues 1699–1713 the composition is skewed to polar residues; it reads KDSGNNQSAGNTDSA. The segment covering 1761-1775 has biased composition (basic and acidic residues); the sequence is LDDHPDPGTEGEKPG. Polar residues-rich tracts occupy residues 1897-1909 and 1929-1947; these read ETSS…TQYR and LEHQ…TEQI. A run of 2 helical transmembrane segments spans residues 2223–2243 and 2466–2486; these read LLSF…ELCG and VLHM…TVYC.

The protein belongs to the unc-79 family. NALCN complex consists of NALCN and auxiliary subunits, UNC79, UNC80 and NACL1. These auxiliary subunits are essential for the NALCN channel function. UNC80 bridges NALCN to UNC79.

It localises to the cell membrane. Auxiliary subunit of the NALCN sodium channel complex, a voltage-gated ion channel responsible for the resting Na(+) permeability that controls neuronal excitability. Activated by neuropeptides substance P, neurotensin, and extracellular calcium that regulates neuronal excitability by controlling the sizes of NALCN-dependent sodium-leak current. The sequence is that of Protein unc-79 homolog (UNC79) from Homo sapiens (Human).